The following is a 468-amino-acid chain: GDNF family receptor alpha-1 (468 aa).

Positions 1-24 (MFLATLYFVLPLLDLLMSAEVSGG) are cleaved as a signal peptide. A run of 3 repeats spans residues 25–113 (DRLD…LQGN), 150–238 (KGNN…YEER), and 239–342 (ERPN…KNAI). A disulfide bridge links C36 with C42. A glycan (N-linked (GlcNAc...) asparagine) is linked at N59. 10 disulfide bridges follow: C154-C214, C161-C167, C178-C192, C187-C233, C216-C221, C243-C313, C250-C256, C267-C285, C277-C337, and C315-C325. N-linked (GlcNAc...) asparagine glycans are attached at residues N347 and N406. S430 carries the GPI-anchor amidated serine lipid modification. Residues 431-468 (HITTKSMAAPPSCGLSSLPVMVFTALAALLSVSLAETS) constitute a propeptide, removed in mature form.

This sequence belongs to the GDNFR family. Interacts with GDNF ligand and RET: forms a 2:2:2 ternary complex composed of GDNF ligand, GFRA1 and RET receptor. Interacts with SORL1, either alone or in complex with GDNF. Interaction between SORL1 and GFRA1 leads to GFRA1 internalization, but not degradation. As to expression, expressed in the brain, in hippocampal neurons (at protein level). Isoform 1 and isoform 2 are expressed in heart, brain, lung, liver, kidney and testis.

The protein resides in the cell membrane. It localises to the golgi apparatus. Its subcellular location is the trans-Golgi network. It is found in the endosome. The protein localises to the multivesicular body. Its function is as follows. Coreceptor for GDNF, a neurotrophic factor that enhances survival and morphological differentiation of dopaminergic neurons and increases their high-affinity dopamine uptake. GDNF-binding leads to autophosphorylation and activation of the RET receptor. The sequence is that of GDNF family receptor alpha-1 (Gfra1) from Mus musculus (Mouse).